The sequence spans 365 residues: Ribosomal RNA large subunit methyltransferase M (365 aa).

Residues S188, C221–G224, D240, D260, and D277 each bind S-adenosyl-L-methionine. The active-site Proton acceptor is K306.

It belongs to the class I-like SAM-binding methyltransferase superfamily. RNA methyltransferase RlmE family. RlmM subfamily. As to quaternary structure, monomer.

The protein resides in the cytoplasm. The catalysed reaction is cytidine(2498) in 23S rRNA + S-adenosyl-L-methionine = 2'-O-methylcytidine(2498) in 23S rRNA + S-adenosyl-L-homocysteine + H(+). In terms of biological role, catalyzes the 2'-O-methylation at nucleotide C2498 in 23S rRNA. In Proteus mirabilis (strain HI4320), this protein is Ribosomal RNA large subunit methyltransferase M.